A 240-amino-acid polypeptide reads, in one-letter code: MVEMHEGAGLPEDGEFLLLDKPLDWTSFDVVAKVRNAYKRGGLKRKVGHSGTLDPKATGLLILATGKKTRELSTLEGLDKVYDAVIRLGARTLSHDSESEEYGLRDVTHLDEGAVKRAASELEGKRMQQAPMHSATWHKGKRLYELARKGTVVTDRKSKEIVVHSFDVLRVELPLAYCRIHVSKGAYIRVLADELGEALGVGGYLAGLRRIAIGSYQVESAMRVEDAVARVLGQMQVTDQ.

Aspartate 54 functions as the Nucleophile in the catalytic mechanism.

The protein belongs to the pseudouridine synthase TruB family. Type 1 subfamily.

The catalysed reaction is uridine(55) in tRNA = pseudouridine(55) in tRNA. Responsible for synthesis of pseudouridine from uracil-55 in the psi GC loop of transfer RNAs. This chain is tRNA pseudouridine synthase B, found in Chlorobium phaeovibrioides (strain DSM 265 / 1930) (Prosthecochloris vibrioformis (strain DSM 265)).